Here is a 227-residue protein sequence, read N- to C-terminus: Cytochrome c oxidase subunit 2 (227 aa).

Over 1–14 the chain is Mitochondrial intermembrane; it reads MAHPVQLGLQDATS. The chain crosses the membrane as a helical span at residues 15–45; it reads PVMEELITFHDQALMAMFLISFLILYALSST. Over 46–59 the chain is Mitochondrial matrix; that stretch reads LTTKLTNTNITDAQ. The helical transmembrane segment at 60–87 threads the bilayer; sequence EMETIWTILPAVILILIALPSLRILYMT. The Mitochondrial intermembrane segment spans residues 88-227; sequence DEINNPSFTI…IFEMGPVFTL (140 aa). The Cu cation site is built by His161, Cys196, Glu198, Cys200, His204, and Met207. A Mg(2+)-binding site is contributed by Glu198.

The protein belongs to the cytochrome c oxidase subunit 2 family. In terms of assembly, component of the cytochrome c oxidase (complex IV, CIV), a multisubunit enzyme composed of 14 subunits. The complex is composed of a catalytic core of 3 subunits MT-CO1, MT-CO2 and MT-CO3, encoded in the mitochondrial DNA, and 11 supernumerary subunits COX4I, COX5A, COX5B, COX6A, COX6B, COX6C, COX7A, COX7B, COX7C, COX8 and NDUFA4, which are encoded in the nuclear genome. The complex exists as a monomer or a dimer and forms supercomplexes (SCs) in the inner mitochondrial membrane with NADH-ubiquinone oxidoreductase (complex I, CI) and ubiquinol-cytochrome c oxidoreductase (cytochrome b-c1 complex, complex III, CIII), resulting in different assemblies (supercomplex SCI(1)III(2)IV(1) and megacomplex MCI(2)III(2)IV(2)). Found in a complex with TMEM177, COA6, COX18, COX20, SCO1 and SCO2. Interacts with TMEM177 in a COX20-dependent manner. Interacts with COX20. Interacts with COX16. It depends on Cu cation as a cofactor.

It localises to the mitochondrion inner membrane. It catalyses the reaction 4 Fe(II)-[cytochrome c] + O2 + 8 H(+)(in) = 4 Fe(III)-[cytochrome c] + 2 H2O + 4 H(+)(out). Component of the cytochrome c oxidase, the last enzyme in the mitochondrial electron transport chain which drives oxidative phosphorylation. The respiratory chain contains 3 multisubunit complexes succinate dehydrogenase (complex II, CII), ubiquinol-cytochrome c oxidoreductase (cytochrome b-c1 complex, complex III, CIII) and cytochrome c oxidase (complex IV, CIV), that cooperate to transfer electrons derived from NADH and succinate to molecular oxygen, creating an electrochemical gradient over the inner membrane that drives transmembrane transport and the ATP synthase. Cytochrome c oxidase is the component of the respiratory chain that catalyzes the reduction of oxygen to water. Electrons originating from reduced cytochrome c in the intermembrane space (IMS) are transferred via the dinuclear copper A center (CU(A)) of subunit 2 and heme A of subunit 1 to the active site in subunit 1, a binuclear center (BNC) formed by heme A3 and copper B (CU(B)). The BNC reduces molecular oxygen to 2 water molecules using 4 electrons from cytochrome c in the IMS and 4 protons from the mitochondrial matrix. This Papio anubis (Olive baboon) protein is Cytochrome c oxidase subunit 2 (MT-CO2).